The sequence spans 470 residues: Sperm-associated antigen 8 (470 aa).

Residues 1 to 21 (METTESTEGSLSRSCDVQPSS) are compositionally biased toward polar residues. 3 disordered regions span residues 1–70 (METT…PPAH), 117–178 (SGTC…GQGP), and 302–321 (LTTQPQSPMSSSTTQRDSYQ). Residues 27–48 (PSEPVPSSSSSPRSTAPAEAPA) are compositionally biased toward low complexity. Polar residues predominate over residues 51-60 (SVLTEPSSDS). Low complexity-rich tracts occupy residues 122 to 175 (LGQS…ADPG) and 303 to 316 (TTQPQSPMSSSTTQ). Mn stretches follow at residues 312–325 (SSTTQRDSYQLPRH) and 364–378 (ESVTHHDYRVELVRA).

Belongs to the SPAG8 family. Microtubule inner protein component of sperm flagellar doublet microtubules. Interacts with FHL5 (via second LIM domain). Interacts with RANBP9. In terms of tissue distribution, expressed in testis (at protein level). Not detected in brain, heart, kidney, spleen, liver, lung, thymus and colon (at protein level).

Its subcellular location is the cytoplasm. The protein resides in the nucleus. The protein localises to the cytoplasmic vesicle. It is found in the secretory vesicle. It localises to the acrosome. Its subcellular location is the cytoskeleton. The protein resides in the microtubule organizing center. The protein localises to the spindle. It is found in the cilium axoneme. It localises to the flagellum axoneme. In terms of biological role, microtubule inner protein (MIP) part of the dynein-decorated doublet microtubules (DMTs) in cilia axoneme, which is required for motile cilia beating. Plays a role in spermatogenesis by enhancing the binding of CREM isoform tau to its coactivator FHL5 and increasing the FHL5-regulated transcriptional activation of CREM isoform tau. Involved in the acrosome reaction and in binding of sperm to the zona pellucida. Plays a role in regulation of the cell cycle by controlling progression through the G2/M phase, possibly by delaying the activation of CDK1 which is required for entry into mitosis. May play a role in fertility and microtubule formation through interaction with RANBP9. The sequence is that of Sperm-associated antigen 8 from Mus musculus (Mouse).